The chain runs to 456 residues: Nitrogenase molybdenum-iron protein beta chain (456 aa).

Residues cysteine 23, cysteine 48, cysteine 106, and serine 141 each contribute to the [8Fe-7S] cluster site.

This sequence belongs to the NifD/NifK/NifE/NifN family. In terms of assembly, tetramer of two alpha and two beta chains. Forms complex with the iron protein (nitrogenase component 2). [8Fe-7S] cluster serves as cofactor.

The catalysed reaction is N2 + 8 reduced [2Fe-2S]-[ferredoxin] + 16 ATP + 16 H2O = H2 + 8 oxidized [2Fe-2S]-[ferredoxin] + 2 NH4(+) + 16 ADP + 16 phosphate + 6 H(+). In terms of biological role, this molybdenum-iron protein is part of the nitrogenase complex that catalyzes the key enzymatic reactions in nitrogen fixation. This Methanosarcina barkeri protein is Nitrogenase molybdenum-iron protein beta chain (nifK2).